The sequence spans 439 residues: Methylenetetrahydrofolate--tRNA-(uracil-5-)-methyltransferase TrmFO (439 aa).

G8 to G13 serves as a coordination point for FAD.

The protein belongs to the MnmG family. TrmFO subfamily. Requires FAD as cofactor.

The protein localises to the cytoplasm. It catalyses the reaction uridine(54) in tRNA + (6R)-5,10-methylene-5,6,7,8-tetrahydrofolate + NADH + H(+) = 5-methyluridine(54) in tRNA + (6S)-5,6,7,8-tetrahydrofolate + NAD(+). It carries out the reaction uridine(54) in tRNA + (6R)-5,10-methylene-5,6,7,8-tetrahydrofolate + NADPH + H(+) = 5-methyluridine(54) in tRNA + (6S)-5,6,7,8-tetrahydrofolate + NADP(+). Catalyzes the folate-dependent formation of 5-methyl-uridine at position 54 (M-5-U54) in all tRNAs. This chain is Methylenetetrahydrofolate--tRNA-(uracil-5-)-methyltransferase TrmFO, found in Dictyoglomus thermophilum (strain ATCC 35947 / DSM 3960 / H-6-12).